The chain runs to 603 residues: UvrABC system protein C (603 aa).

The GIY-YIG domain occupies 15–92 (DQPGCYLMKD…IKKHDPRFNI (78 aa)). The UVR domain occupies 197–232 (KTVKNDLMKKMQEAAENMEFEKAGEFRDQINAIETT).

This sequence belongs to the UvrC family. As to quaternary structure, interacts with UvrB in an incision complex.

The protein resides in the cytoplasm. Functionally, the UvrABC repair system catalyzes the recognition and processing of DNA lesions. UvrC both incises the 5' and 3' sides of the lesion. The N-terminal half is responsible for the 3' incision and the C-terminal half is responsible for the 5' incision. The polypeptide is UvrABC system protein C (Listeria innocua serovar 6a (strain ATCC BAA-680 / CLIP 11262)).